The sequence spans 921 residues: Leucine--tRNA ligase (921 aa).

The 'HIGH' region motif lies at 80–90 (PYPSGKLHMGH). The 'KMSKS' region motif lies at 667–671 (KMSKS). Position 670 (Lys-670) interacts with ATP.

This sequence belongs to the class-I aminoacyl-tRNA synthetase family.

The protein resides in the cytoplasm. The enzyme catalyses tRNA(Leu) + L-leucine + ATP = L-leucyl-tRNA(Leu) + AMP + diphosphate. The protein is Leucine--tRNA ligase of Psychrobacter arcticus (strain DSM 17307 / VKM B-2377 / 273-4).